Consider the following 718-residue polypeptide: DNA ligase (718 aa).

Residues 44–48, 93–94, and E127 contribute to the NAD(+) site; these read DADYD and SL. K129 serves as the catalytic N6-AMP-lysine intermediate. R150, E186, K302, and K326 together coordinate NAD(+). Positions 432, 435, 456, and 462 each coordinate Zn(2+). The 79-residue stretch at 640 to 718 folds into the BRCT domain; sequence TAGSPVAGKT…EDEWLALISG (79 aa).

This sequence belongs to the NAD-dependent DNA ligase family. LigA subfamily. Requires Mg(2+) as cofactor. The cofactor is Mn(2+).

The enzyme catalyses NAD(+) + (deoxyribonucleotide)n-3'-hydroxyl + 5'-phospho-(deoxyribonucleotide)m = (deoxyribonucleotide)n+m + AMP + beta-nicotinamide D-nucleotide.. DNA ligase that catalyzes the formation of phosphodiester linkages between 5'-phosphoryl and 3'-hydroxyl groups in double-stranded DNA using NAD as a coenzyme and as the energy source for the reaction. It is essential for DNA replication and repair of damaged DNA. In Rhizobium etli (strain CIAT 652), this protein is DNA ligase.